Reading from the N-terminus, the 158-residue chain is PRA1 family protein 2 (158 aa).

The next 4 membrane-spanning stretches (helical) occupy residues 36–58 (NLNF…TLFT), 62–79 (LLVA…LFFV), 88–108 (FAVL…VIVI), and 113–133 (GLTL…HSAL).

The protein belongs to the PRA1 family.

It is found in the membrane. Functionally, may act as a general Rab protein regulator. The polypeptide is PRA1 family protein 2 (prafB) (Dictyostelium discoideum (Social amoeba)).